The primary structure comprises 69 residues: UPF0434 protein Rmet_0534 (69 aa).

It belongs to the UPF0434 family.

This is UPF0434 protein Rmet_0534 from Cupriavidus metallidurans (strain ATCC 43123 / DSM 2839 / NBRC 102507 / CH34) (Ralstonia metallidurans).